The chain runs to 77 residues: MEKLTILLLVAAVLMSTQALIQGGLDERQKAKSNFFSKRKSNAESWWEGECRTWNAPCSFTSQCCFGKCAHHRCIAW.

Residues 1–19 (MEKLTILLLVAAVLMSTQA) form the signal peptide. The propeptide occupies 20–50 (LIQGGLDERQKAKSNFFSKRKSNAESWWEGE). 3 cysteine pairs are disulfide-bonded: Cys51/Cys65, Cys58/Cys69, and Cys64/Cys74.

Belongs to the conotoxin O2 superfamily. In terms of tissue distribution, expressed by the venom duct.

Its subcellular location is the secreted. The sequence is that of Conotoxin S6.11 from Conus striatus (Striated cone).